Here is an 870-residue protein sequence, read N- to C-terminus: MCLLFNRVVDMENPERHTVYLVVSLFVTFLSNKNSTPTDEKANAKKQSLVFRHFNTLLGYSSTEKCFTIPPARLRKAAVCNAFISGLPEILDMNLHTGNQLLPTVAQLLIHLPSPQKLASDQNVTNYSLALLTQHTRHLWLQSLILILYKYRFDQLPVSEYIVRLIGIVVKTLQNQVHECSDAADQSAEIDTWDEIEDDDVARAELIRPESLTVTTIQEATPAAEGMVHIGAVCVMQPTIVEPEGLAPEPLIARKRSTAVQEVRRKKSAIEVVKKSCTLRCGHCNEAIEMFDEETISLCLIALETFLHREPSMAAPILFKILYTVTRLIDTPMYPWHSTEMFVPANSRSVAKQMLRVSLHHLSTSAICLQLFDTKIPRPDAFWSVVALSLADFPELSPVYFIQILMEDLEESWPGSVKLIMKNLAFYIVEIPTDMYNNPWKDLVGHLETFFKRYHSAISADNGITPTRAEIENVIIVMTHVFKVQTFSSSKSPVTLVEAFARWLSESLHSADVSLESLLGVCTACNRALIRERDKQCITRALVTELMQAIKFKVKLHESNYVTIANMILQDAGEDIEVPLLDDQFNTAASEAIRPFLFEVLDFIADLHVIAKLKKESNSDALGGDLKVKLAEAIAVEMSRSNARDCRTVIRFIPWLMSPPSVTQAAPSAFADSVTNVRVLSWLLLGALHANHSCLPVPIECSQHMADYIHFVLAGFADQSKQSVVHMSALFHAFHLCQLWTVYCERAATYSSTTAFAHLVDFWARVTPAILQLLSHSKVLADMVNLHFLNTIQALQQVNSALLCQLYSMWAPILTAYHSQIPNQLRMKLDSCQNQPSLEAPLVTEWLKKVRYKISQVELQTSAASPYYTV.

This is Uncoordinated protein 79 (unc-79) from Caenorhabditis elegans.